The chain runs to 236 residues: Purine nucleoside phosphorylase DeoD-type (236 aa).

An a purine D-ribonucleoside-binding site is contributed by H5. Residues G21, R25, R44, and 88–91 (RVGT) each bind phosphate. A purine D-ribonucleoside contacts are provided by residues 180 to 182 (DME) and 204 to 205 (SD). Residue D205 is the Proton donor of the active site.

The protein belongs to the PNP/UDP phosphorylase family. As to quaternary structure, homohexamer; trimer of homodimers.

The enzyme catalyses a purine D-ribonucleoside + phosphate = a purine nucleobase + alpha-D-ribose 1-phosphate. It catalyses the reaction a purine 2'-deoxy-D-ribonucleoside + phosphate = a purine nucleobase + 2-deoxy-alpha-D-ribose 1-phosphate. Catalyzes the reversible phosphorolytic breakdown of the N-glycosidic bond in the beta-(deoxy)ribonucleoside molecules, with the formation of the corresponding free purine bases and pentose-1-phosphate. The sequence is that of Purine nucleoside phosphorylase DeoD-type from Buchnera aphidicola subsp. Schizaphis graminum (strain Sg).